The following is a 357-amino-acid chain: Peptide chain release factor 1 (357 aa).

Q234 bears the N5-methylglutamine mark. Positions 282–313 are disordered; the sequence is DSKKQEQRSNNRKQQVGSGDRSERIRTYNFPQ.

This sequence belongs to the prokaryotic/mitochondrial release factor family. Methylated by PrmC. Methylation increases the termination efficiency of RF1.

Its subcellular location is the cytoplasm. Its function is as follows. Peptide chain release factor 1 directs the termination of translation in response to the peptide chain termination codons UAG and UAA. The sequence is that of Peptide chain release factor 1 from Borreliella afzelii (strain PKo) (Borrelia afzelii).